The chain runs to 180 residues: Putative methyltransferase YrhH (180 aa).

Belongs to the methyltransferase superfamily.

This chain is Putative methyltransferase YrhH (yrhH), found in Bacillus subtilis (strain 168).